A 931-amino-acid chain; its full sequence is Scaffold attachment factor B1 (931 aa).

A compositionally biased stretch (low complexity) spans 1–24; that stretch reads MAETLSGLGDSGAASAAAVSSAAS. A disordered region spans residues 1–35; that stretch reads MAETLSGLGDSGAASAAAVSSAASETGTRRLSDLR. Ala2 is modified (N-acetylalanine). 2 positions are modified to phosphoserine: Ser24 and Ser55. The SAP domain maps to 31-65; that stretch reads LSDLRVIDLRAELRKRNLTSSGNKSVLMERLKKAI. A disordered region spans residues 64-121; the sequence is AIEEEGGNPDEIEVISEGNKKMPKRPSKGKKPEDEGVEDNGLEENSGDGQEDVETSLE. A compositionally biased stretch (acidic residues) spans 67 to 77; that stretch reads EEGGNPDEIEV. Position 79 is a phosphoserine (Ser79). Positions 98–118 are enriched in acidic residues; sequence EGVEDNGLEENSGDGQEDVET. Glycyl lysine isopeptide (Lys-Gly) (interchain with G-Cter in SUMO2) cross-links involve residues Lys171 and Lys185. 3 positions are modified to phosphoserine: Ser194, Ser196, and Ser208. Disordered regions lie at residues 205–304 and 316–430; these read EEAS…TRCQ and KREP…GRNF. Basic and acidic residues predominate over residues 224 to 233; sequence CKSEPVKEEG. Residue Lys230 forms a Glycyl lysine isopeptide (Lys-Gly) (interchain with G-Cter in SUMO) linkage. A compositionally biased stretch (acidic residues) spans 267-287; it reads EEEEEEEEEEEQEEEQEEEGD. A Glycyl lysine isopeptide (Lys-Gly) (interchain with G-Cter in SUMO) cross-link involves residue Lys316. Residues 341–356 show a composition bias toward polar residues; it reads EQSSTAAQLPETTSQE. A compositionally biased stretch (basic and acidic residues) spans 368 to 380; sequence EPRDSKDDVKKFA. Lys403 participates in a covalent cross-link: Glycyl lysine isopeptide (Lys-Gly) (interchain with G-Cter in SUMO2). Residues Ser405 and Ser406 each carry the phosphoserine modification. A compositionally biased stretch (basic and acidic residues) spans 412–423; it reads DTKRLSREEKGR. A Glycyl lysine isopeptide (Lys-Gly) (interchain with G-Cter in SUMO2) cross-link involves residue Lys414. In terms of domain architecture, RRM spans 428-506; that stretch reads RNFWVSGLSS…KMISVEKAKS (79 aa). At Ser437 the chain carries Phosphoserine. Basic and acidic residues-rich tracts occupy residues 500 to 573 and 581 to 592; these read SVEK…ERSR and GTERTVVMDKSK. 4 disordered regions span residues 500 to 663, 691 to 720, 759 to 843, and 872 to 931; these read SVEK…WERE, RLER…LRRQ, RYHS…PRRD, and RWQG…QQTQ. Glycyl lysine isopeptide (Lys-Gly) (interchain with G-Cter in SUMO2) cross-links involve residues Lys505, Lys536, Lys565, and Lys592. The tract at residues 550-816 is interaction with POLR2A; SFRS1; SFRS9 and SFRS10; that stretch reads TDDGSTEKSK…RHGGPERHGR (267 aa). Residue Lys600 forms a Glycyl lysine isopeptide (Lys-Gly) (interchain with G-Cter in SUMO1); alternate linkage. Lys600 is covalently cross-linked (Glycyl lysine isopeptide (Lys-Gly) (interchain with G-Cter in SUMO2); alternate). Phosphoserine is present on residues Ser602, Ser604, Ser623, and Ser626. Residues 603–663 are compositionally biased toward basic and acidic residues; sequence GSKERASKSQ…QRLQAQWERE (61 aa). The Nuclear localization signal motif lies at 621 to 638; the sequence is KRSVVSFDKVKESRKSRD. Lys629 is subject to N6-acetyllysine. Positions 759 to 820 are enriched in basic and acidic residues; that stretch reads RYHSDFSRQD…PERHGRDSRD (62 aa). Arg834 is modified (omega-N-methylarginine). Arg892, Arg898, Arg908, and Arg914 each carry asymmetric dimethylarginine.

Monomer and homodimer. Interacts with KHDRBS3. Interacts with CLK2. Interacts with POLR2A, ASF/SRSF1, SRp30c/SRFS9 and TRA2B/SFRS10. Interacts with SRPK1 and inhibits its activity. Interacts with RBMX. Interacts with FUS. Interacts with ZBED4. Post-translationally, phosphorylated by CDC-like kinase 2 (CLK2). In terms of processing, sumoylated by PIAS1 with SUMO1 and SUMO2/3, desumoylated by SENP1. Sumoylation is required for transcriptional repressor activity.

Its subcellular location is the nucleus. Its function is as follows. Binds to scaffold/matrix attachment region (S/MAR) DNA and forms a molecular assembly point to allow the formation of a 'transcriptosomal' complex (consisting of SR proteins and RNA polymerase II) coupling transcription and RNA processing. Functions as an estrogen receptor corepressor and can also bind to the HSP27 promoter and decrease its transcription. Thereby acts as a negative regulator of cell proliferation. When associated with RBMX, binds to and stimulates transcription from the SREBF1 promoter. The chain is Scaffold attachment factor B1 (Safb) from Rattus norvegicus (Rat).